The following is a 187-amino-acid chain: Threonylcarbamoyl-AMP synthase (187 aa).

Positions 3–187 constitute a YrdC-like domain; it reads QVTPSQISGI…IQTGHIFRQG (185 aa).

This sequence belongs to the SUA5 family. TsaC subfamily.

It is found in the cytoplasm. The catalysed reaction is L-threonine + hydrogencarbonate + ATP = L-threonylcarbamoyladenylate + diphosphate + H2O. In terms of biological role, required for the formation of a threonylcarbamoyl group on adenosine at position 37 (t(6)A37) in tRNAs that read codons beginning with adenine. Catalyzes the conversion of L-threonine, HCO(3)(-)/CO(2) and ATP to give threonylcarbamoyl-AMP (TC-AMP) as the acyladenylate intermediate, with the release of diphosphate. The sequence is that of Threonylcarbamoyl-AMP synthase from Shewanella amazonensis (strain ATCC BAA-1098 / SB2B).